The primary structure comprises 293 residues: Ethanolamine ammonia-lyase small subunit (293 aa).

The adenosylcob(III)alamin site is built by Val207 and Glu228.

It belongs to the EutC family. As to quaternary structure, the basic unit is a heterodimer which dimerizes to form tetramers. The heterotetramers trimerize; 6 large subunits form a core ring with 6 small subunits projecting outwards. Adenosylcob(III)alamin is required as a cofactor.

Its subcellular location is the bacterial microcompartment. It carries out the reaction ethanolamine = acetaldehyde + NH4(+). It functions in the pathway amine and polyamine degradation; ethanolamine degradation. In terms of biological role, catalyzes the deamination of various vicinal amino-alcohols to oxo compounds. Allows this organism to utilize ethanolamine as the sole source of nitrogen and carbon in the presence of external vitamin B12. The chain is Ethanolamine ammonia-lyase small subunit from Listeria innocua serovar 6a (strain ATCC BAA-680 / CLIP 11262).